The primary structure comprises 146 residues: 3-dehydroquinate dehydratase (146 aa).

Tyr23 acts as the Proton acceptor in catalysis. Residues Asn75, His81, and Asp88 each coordinate substrate. His101 serves as the catalytic Proton donor. Substrate is bound by residues 102–103 (LS) and Arg112.

It belongs to the type-II 3-dehydroquinase family. In terms of assembly, homododecamer.

The enzyme catalyses 3-dehydroquinate = 3-dehydroshikimate + H2O. It participates in metabolic intermediate biosynthesis; chorismate biosynthesis; chorismate from D-erythrose 4-phosphate and phosphoenolpyruvate: step 3/7. Catalyzes a trans-dehydration via an enolate intermediate. The polypeptide is 3-dehydroquinate dehydratase (Saccharophagus degradans (strain 2-40 / ATCC 43961 / DSM 17024)).